The sequence spans 299 residues: Tyrosine recombinase XerC (299 aa).

Positions 1–85 constitute a Core-binding (CB) domain; the sequence is MERQLEAYCA…AVRGLYRYLN (85 aa). Residues 106-285 form the Tyr recombinase domain; the sequence is RLPKVLDTDR…DFQHLAAVYD (180 aa). Residues R146, K170, H237, R240, and H263 contribute to the active site. Y272 (O-(3'-phospho-DNA)-tyrosine intermediate) is an active-site residue.

Belongs to the 'phage' integrase family. XerC subfamily. As to quaternary structure, forms a cyclic heterotetrameric complex composed of two molecules of XerC and two molecules of XerD.

Its subcellular location is the cytoplasm. In terms of biological role, site-specific tyrosine recombinase, which acts by catalyzing the cutting and rejoining of the recombining DNA molecules. The XerC-XerD complex is essential to convert dimers of the bacterial chromosome into monomers to permit their segregation at cell division. It also contributes to the segregational stability of plasmids. The protein is Tyrosine recombinase XerC of Pseudomonas putida (strain W619).